The following is a 223-amino-acid chain: MKFFIDTADLEEISAANDLGVLDGVTTNPSLVAKIVSDPEKFTYQDFKDHIAKVCEIVDGPVSAEVTTLSPEEMISQGEELAAIHDNVVVKCPLTRDGLKAMRHLSGNGIRINATLVFSPSQAILAAKAGASYVSPFVGRLDDISTEGMALVDQIVRIYDNYRFPTEVLVASIRHPQHVVEAALMGADIATIPFDVIGQLLKHPLTDSGLKRFMDDASVIQQG.

Catalysis depends on Lys-91, which acts as the Schiff-base intermediate with substrate.

The protein belongs to the transaldolase family. Type 3B subfamily.

The protein localises to the cytoplasm. The enzyme catalyses D-sedoheptulose 7-phosphate + D-glyceraldehyde 3-phosphate = D-erythrose 4-phosphate + beta-D-fructose 6-phosphate. Its pathway is carbohydrate degradation; pentose phosphate pathway; D-glyceraldehyde 3-phosphate and beta-D-fructose 6-phosphate from D-ribose 5-phosphate and D-xylulose 5-phosphate (non-oxidative stage): step 2/3. Transaldolase is important for the balance of metabolites in the pentose-phosphate pathway. The polypeptide is Probable transaldolase (Chlorobium phaeobacteroides (strain BS1)).